The primary structure comprises 454 residues: Cobyrinate a,c-diamide synthase (454 aa).

The GATase cobBQ-type domain maps to 247 to 442 (KIGIAMDSAF…IHAHWASNPN (196 aa)). Cys329 (nucleophile) is an active-site residue.

The protein belongs to the CobB/CbiA family. The cofactor is Mg(2+).

It catalyses the reaction cob(II)yrinate + 2 L-glutamine + 2 ATP + 2 H2O = cob(II)yrinate a,c diamide + 2 L-glutamate + 2 ADP + 2 phosphate + 2 H(+). It participates in cofactor biosynthesis; adenosylcobalamin biosynthesis; cob(II)yrinate a,c-diamide from sirohydrochlorin (anaerobic route): step 10/10. In terms of biological role, catalyzes the ATP-dependent amidation of the two carboxylate groups at positions a and c of cobyrinate, using either L-glutamine or ammonia as the nitrogen source. The polypeptide is Cobyrinate a,c-diamide synthase (Leptospira interrogans serogroup Icterohaemorrhagiae serovar copenhageni (strain Fiocruz L1-130)).